A 508-amino-acid chain; its full sequence is MDPSEKKISVWICQEEKLVSGLSRRTTCSDVVRVLLEDGCRRRCRQRRGQRRGLTEDPSGQLELPEPPDENDEDDDDAMPPGMLCGPPQCYCIVEKWRGFERILPNKTRILRLWTAWGDEQENVRFVLVRSEASLPNAGPRSAEARVVLSRERPCLARGAPARPSLALTQEKQRRVVRKAFRKLAKLNRRRQQQPSSPCSSTSSSTASSCSSSARTHESASVERMETLVHLVLSQDHTIRQQVQRLRELDREIDRYEAKVHLDRMRRHGVNYVQDTYLVGAGIDLDGQTPEGEPEDATLEEKGTEPAAPLDSEAQAAALEELARRCDDLVRLQEERAQQEELLERLSAEIQEELNQRWMQRRNEELAAREESLEPDGGPDGELLLEQERVRTQLSTSLYIGLRLSTDLEAVKADLDYSQQQRDIKERELQGLLQSLHTFEQTVVHDGALGSSGPSREPQPQTCAEMWVDQARGLAKSCPGNDEDSDTGLSSMHSQDSDSVPPVCESLV.

In terms of domain architecture, Ras-associating spans 1–133; sequence MDPSEKKISV…VRFVLVRSEA (133 aa). Disordered stretches follow at residues 51-81 and 186-221; these read RRGL…AMPP and KLNR…ESAS. Over residues 66 to 78 the composition is skewed to acidic residues; sequence EPPDENDEDDDDA. The segment covering 195–214 has biased composition (low complexity); that stretch reads PSSPCSSTSSSTASSCSSSA. 2 coiled-coil regions span residues 235–266 and 319–358; these read QDHT…DRMR and LEEL…NQRW. The tract at residues 473–508 is disordered; that stretch reads GLAKSCPGNDEDSDTGLSSMHSQDSDSVPPVCESLV. Over residues 487 to 498 the composition is skewed to polar residues; the sequence is TGLSSMHSQDSD.

Expressed in neural progenitor cells (at protein level).

Its subcellular location is the cytoplasm. The protein localises to the cytosol. It is found in the cytoskeleton. It localises to the microtubule organizing center. The protein resides in the centrosome. Its subcellular location is the spindle pole. Plays an important role in regulating embryonic neurogenesis. In Mus musculus (Mouse), this protein is Ras association domain-containing protein 10 (Rassf10).